A 246-amino-acid polypeptide reads, in one-letter code: tRNA1(Val) (adenine(37)-N6)-methyltransferase (246 aa).

This sequence belongs to the methyltransferase superfamily. tRNA (adenine-N(6)-)-methyltransferase family.

It is found in the cytoplasm. It catalyses the reaction adenosine(37) in tRNA1(Val) + S-adenosyl-L-methionine = N(6)-methyladenosine(37) in tRNA1(Val) + S-adenosyl-L-homocysteine + H(+). Its function is as follows. Specifically methylates the adenine in position 37 of tRNA(1)(Val) (anticodon cmo5UAC). The protein is tRNA1(Val) (adenine(37)-N6)-methyltransferase of Shewanella halifaxensis (strain HAW-EB4).